We begin with the raw amino-acid sequence, 60 residues long: Metallothionein A (60 aa).

Positions 1-28 are beta; it reads MDPCDCSKSGTCNCGGSCTCTNCSCKSC. Residues Cys-4, Cys-6, Cys-12, Cys-14, Cys-18, Cys-20, Cys-23, Cys-25, Cys-28, Cys-32, Cys-33, Cys-35, Cys-36, Cys-40, Cys-43, Cys-47, Cys-49, Cys-54, Cys-58, and Cys-59 each contribute to the a divalent metal cation site. The interval 29–60 is alpha; that stretch reads KKSCCPCCPSGCTKCASGCVCKGKTCDTSCCQ.

It belongs to the metallothionein superfamily. Type 1 family.

Its function is as follows. Metallothioneins have a high content of cysteine residues that bind various heavy metals. This is Metallothionein A (mta) from Chionodraco hamatus (Antarctic teleost icefish).